The sequence spans 1028 residues: MQVSRRKFFKICAGGMAGTSAAMLGFAPANVLAAPREYKLLRAFESRNTCTYCAVSCGMLLYSTGKPYNSLSSHTGTNTRSKLFHIEGDPDHPVSRGALCPKGAGSLDYVNSESRSLYPQYRAPGSDKWERISWKDAIKRIARLMKDDRDANFVEKDSNGKTVNRWATTGIMTASAMSNEAALLTQKWIRMLGMVPVCNQANTUHGPTVASLAPSFGRGAMTNNWVDIKNANLIIVQGGNPAEAHPVGFRWAIEAKKNGAKIIVIDPRFNRTASVADLHAPIRSGSDITFLMGVIRYLLETNQIQHEYVKHYTNASFLIDEGFKFEDGLFVGYNEEKRNYDKSKWNYQFDENGHAKRDMTLQHPRCVINILKEHVSRYTPEMVERITGVKQKLFLQICEEIGKTSVPNKTMTHLYALGFTEHSIGTQNIRSMAIIQLLLGNMGMPGGGINALRGHSNVQGTTDMGLLPMSLPGYMRLPNDKDTSYDQYINAITPKDIVPNQVNYYRHTSKFFVSMMKTFYGDNATKENGWGFDFLPKADRLYDPITHVKLMNEGKLHGWILQGFNVLNSLPNKNKTLSGMSKLKYLVVMDPLQTESSEFWRNFGESNNVNPAEIQTEVFRLPTTCFAEEEGSIVNSGRWTQWHWKGCDQPGEALPDVDILSMLREEMHELYKKEGGQGIESFEAMTWNYAQPHSPSAVELAKELNGYALEDLYDPNGNLMYKKGQLLNGFAHLRDDGTTTSGNWLYVGQWTEKGNQTANRDNSDPSGLGCTIGWGFAWPANRRVLYSRASLDINGNPWDKNRQLIKWNGKNWNWFDIADYGTQPPGSDTGPFIMSAEGVGRLFAVDKIANGPMPEHYEPVESPIDTNPFHPNVVTDPTLRIYKEDREFIGSNKEYPFVATTYRLTEHFHSWTAQSALNIIAQPQQFVEIGEKLAAEKGIQKGDMVKITSRRGYIKAVAVVTKRLKDLEIDGRVVHHIGLPIHWNMKALNGKGNRGFSTNTLTPSWGEAITQTPEYKTFLVNIEKVGEA.

Residues 1 to 33 (MQVSRRKFFKICAGGMAGTSAAMLGFAPANVLA) constitute a signal peptide (tat-type signal). The region spanning 43 to 114 (AFESRNTCTY…GSLDYVNSES (72 aa)) is the 4Fe-4S Mo/W bis-MGD-type domain. Cys50, Cys53, Cys57, and Cys100 together coordinate [4Fe-4S] cluster. Sec204 is a non-standard amino acid (selenocysteine).

It belongs to the prokaryotic molybdopterin-containing oxidoreductase family. As to quaternary structure, formate dehydrogenase is a membrane-bound complex, formed by subunits alpha, beta and gamma. Requires Mo-bis(molybdopterin guanine dinucleotide) as cofactor. It depends on [4Fe-4S] cluster as a cofactor. In terms of processing, predicted to be exported by the Tat system. The position of the signal peptide cleavage has not been experimentally proven.

It is found in the periplasm. It catalyses the reaction formate + NAD(+) = CO2 + NADH. In terms of biological role, allows to use formate as major electron donor during anaerobic respiration. Subunit alpha possibly forms the active site. This Haemophilus influenzae (strain ATCC 51907 / DSM 11121 / KW20 / Rd) protein is Formate dehydrogenase major subunit (fdxG).